We begin with the raw amino-acid sequence, 305 residues long: tRNA uridine(34) hydroxylase (305 aa).

The Rhodanese domain maps to 126-220 (CDPEVTVIDT…YLEEVPAQES (95 aa)). The active-site Cysteine persulfide intermediate is Cys-180.

This sequence belongs to the TrhO family.

It catalyses the reaction uridine(34) in tRNA + AH2 + O2 = 5-hydroxyuridine(34) in tRNA + A + H2O. Functionally, catalyzes oxygen-dependent 5-hydroxyuridine (ho5U) modification at position 34 in tRNAs. The protein is tRNA uridine(34) hydroxylase of Nostoc punctiforme (strain ATCC 29133 / PCC 73102).